Consider the following 107-residue polypeptide: Ig kappa chain V-VI region J539 (107 aa).

A framework-1 region spans residues 1 to 23 (EIVLTQSPAITAASLGQKVTITC). Cys23 and Cys87 form a disulfide bridge. A complementarity-determining-1 region spans residues 24 to 33 (SASSSVSSLH). The tract at residues 34-48 (WYQQKSGTSPKPWIY) is framework-2. Residues 49–55 (EISKLAS) form a complementarity-determining-2 region. The tract at residues 56-87 (GVPARFSGSGSGTSYSLTINTMEAEDAAIYYC) is framework-3. The complementarity-determining-3 stretch occupies residues 88-96 (QQWTYPLIT). Residues 97 to 106 (FGAGTKLELK) form a framework-4 region.

The chain is Ig kappa chain V-VI region J539 from Mus musculus (Mouse).